Reading from the N-terminus, the 319-residue chain is Acetyl-coenzyme A carboxylase carboxyl transferase subunit alpha (319 aa).

Positions 35-296 constitute a CoA carboxyltransferase C-terminal domain; the sequence is NIDEEVHRLR…KTQLLADLAD (262 aa).

This sequence belongs to the AccA family. In terms of assembly, acetyl-CoA carboxylase is a heterohexamer composed of biotin carboxyl carrier protein (AccB), biotin carboxylase (AccC) and two subunits each of ACCase subunit alpha (AccA) and ACCase subunit beta (AccD).

The protein localises to the cytoplasm. It carries out the reaction N(6)-carboxybiotinyl-L-lysyl-[protein] + acetyl-CoA = N(6)-biotinyl-L-lysyl-[protein] + malonyl-CoA. It functions in the pathway lipid metabolism; malonyl-CoA biosynthesis; malonyl-CoA from acetyl-CoA: step 1/1. Component of the acetyl coenzyme A carboxylase (ACC) complex. First, biotin carboxylase catalyzes the carboxylation of biotin on its carrier protein (BCCP) and then the CO(2) group is transferred by the carboxyltransferase to acetyl-CoA to form malonyl-CoA. In Cronobacter sakazakii (strain ATCC BAA-894) (Enterobacter sakazakii), this protein is Acetyl-coenzyme A carboxylase carboxyl transferase subunit alpha.